A 351-amino-acid polypeptide reads, in one-letter code: DNA polymerase IV (351 aa).

Positions 4 to 185 (IIHVDMDCFF…LPLEKIPGVG (182 aa)) constitute a UmuC domain. The Mg(2+) site is built by aspartate 8 and aspartate 103. Residue glutamate 104 is part of the active site.

Belongs to the DNA polymerase type-Y family. As to quaternary structure, monomer. Mg(2+) is required as a cofactor.

The protein localises to the cytoplasm. The catalysed reaction is DNA(n) + a 2'-deoxyribonucleoside 5'-triphosphate = DNA(n+1) + diphosphate. In terms of biological role, poorly processive, error-prone DNA polymerase involved in untargeted mutagenesis. Copies undamaged DNA at stalled replication forks, which arise in vivo from mismatched or misaligned primer ends. These misaligned primers can be extended by PolIV. Exhibits no 3'-5' exonuclease (proofreading) activity. May be involved in translesional synthesis, in conjunction with the beta clamp from PolIII. This Shigella flexneri protein is DNA polymerase IV.